The chain runs to 215 residues: Programmed cell death protein 10 homolog (215 aa).

Belongs to the PDCD10 family. As to quaternary structure, interacts with gck-1. As to expression, expressed in pharynx, intestine, germline, vulva and excretory canals.

It localises to the cytoplasm. The protein localises to the apical cell membrane. Its function is as follows. Involved in excretory canal elongation during postembryonic development. Plays a role in promoting Golgi stability, ER integrity and vesicle transport probably by regulating the activation of Rho GTPase cdc-42. Involved in fertility. This Caenorhabditis elegans protein is Programmed cell death protein 10 homolog.